The chain runs to 199 residues: Protein-methionine-sulfoxide reductase heme-binding subunit MsrQ (199 aa).

4 helical membrane-spanning segments follow: residues 10–30 (WLKVCLHLAGFLPLLWLFWAI), 82–102 (LWCFVWATLHLTSYALLELGI), 116–136 (PYLTLGIISWLVLLALTLTST), and 153–173 (VVYLVAILAPIHYLWSVKILS).

The protein belongs to the MsrQ family. As to quaternary structure, heterodimer of a catalytic subunit (MsrP) and a heme-binding subunit (MsrQ). FMN is required as a cofactor. It depends on heme b as a cofactor.

The protein localises to the cell inner membrane. In terms of biological role, part of the MsrPQ system that repairs oxidized periplasmic proteins containing methionine sulfoxide residues (Met-O), using respiratory chain electrons. Thus protects these proteins from oxidative-stress damage caused by reactive species of oxygen and chlorine generated by the host defense mechanisms. MsrPQ is essential for the maintenance of envelope integrity under bleach stress, rescuing a wide series of structurally unrelated periplasmic proteins from methionine oxidation, including the primary periplasmic chaperone SurA and the lipoprotein Pal. MsrQ provides electrons for reduction to the reductase catalytic subunit MsrP, using the quinone pool of the respiratory chain. The chain is Protein-methionine-sulfoxide reductase heme-binding subunit MsrQ from Salmonella agona (strain SL483).